We begin with the raw amino-acid sequence, 286 residues long: ATP synthase gamma chain (286 aa).

Belongs to the ATPase gamma chain family. F-type ATPases have 2 components, CF(1) - the catalytic core - and CF(0) - the membrane proton channel. CF(1) has five subunits: alpha(3), beta(3), gamma(1), delta(1), epsilon(1). CF(0) has three main subunits: a, b and c.

The protein resides in the cell inner membrane. Functionally, produces ATP from ADP in the presence of a proton gradient across the membrane. The gamma chain is believed to be important in regulating ATPase activity and the flow of protons through the CF(0) complex. The chain is ATP synthase gamma chain from Fuscovulum blasticum (Rhodobacter blasticus).